Reading from the N-terminus, the 447-residue chain is Phosphoglucosamine mutase (447 aa).

The active-site Phosphoserine intermediate is the Ser-101. Positions 101, 242, 244, and 246 each coordinate Mg(2+). Ser-101 bears the Phosphoserine mark.

Belongs to the phosphohexose mutase family. Requires Mg(2+) as cofactor. In terms of processing, activated by phosphorylation.

It carries out the reaction alpha-D-glucosamine 1-phosphate = D-glucosamine 6-phosphate. Its function is as follows. Catalyzes the conversion of glucosamine-6-phosphate to glucosamine-1-phosphate. This Methylobacterium radiotolerans (strain ATCC 27329 / DSM 1819 / JCM 2831 / NBRC 15690 / NCIMB 10815 / 0-1) protein is Phosphoglucosamine mutase.